We begin with the raw amino-acid sequence, 289 residues long: ATP synthase gamma chain (289 aa).

It belongs to the ATPase gamma chain family. F-type ATPases have 2 components, CF(1) - the catalytic core - and CF(0) - the membrane proton channel. CF(1) has five subunits: alpha(3), beta(3), gamma(1), delta(1), epsilon(1). CF(0) has three main subunits: a, b and c.

It is found in the cell membrane. In terms of biological role, produces ATP from ADP in the presence of a proton gradient across the membrane. The gamma chain is believed to be important in regulating ATPase activity and the flow of protons through the CF(0) complex. This Lawsonia intracellularis (strain PHE/MN1-00) protein is ATP synthase gamma chain.